The primary structure comprises 75 residues: Large ribosomal subunit protein bL31c (75 aa).

This sequence belongs to the bacterial ribosomal protein bL31 family. Type A subfamily. As to quaternary structure, part of the 50S ribosomal subunit.

It localises to the plastid. The protein localises to the chloroplast. Functionally, binds the 23S rRNA. The polypeptide is Large ribosomal subunit protein bL31c (Cyanidium caldarium (Red alga)).